Reading from the N-terminus, the 101-residue chain is NAD(P)H-quinone oxidoreductase subunit 4L, chloroplastic (101 aa).

The next 3 membrane-spanning stretches (helical) occupy residues 2-22 (ILEHVLVLSAYLFLIGLYGLI), 32-52 (MCLELILNAVNMNFVTFSDFF), and 61-81 (IFCIFVIAIAAAEAAIGLAIV).

The protein belongs to the complex I subunit 4L family. In terms of assembly, NDH is composed of at least 16 different subunits, 5 of which are encoded in the nucleus.

Its subcellular location is the plastid. It is found in the chloroplast thylakoid membrane. It carries out the reaction a plastoquinone + NADH + (n+1) H(+)(in) = a plastoquinol + NAD(+) + n H(+)(out). It catalyses the reaction a plastoquinone + NADPH + (n+1) H(+)(in) = a plastoquinol + NADP(+) + n H(+)(out). Functionally, NDH shuttles electrons from NAD(P)H:plastoquinone, via FMN and iron-sulfur (Fe-S) centers, to quinones in the photosynthetic chain and possibly in a chloroplast respiratory chain. The immediate electron acceptor for the enzyme in this species is believed to be plastoquinone. Couples the redox reaction to proton translocation, and thus conserves the redox energy in a proton gradient. The protein is NAD(P)H-quinone oxidoreductase subunit 4L, chloroplastic of Crucihimalaya wallichii (Rock-cress).